A 154-amino-acid polypeptide reads, in one-letter code: Small heat shock protein C2 (154 aa).

The region spanning 43 to 154 (STEKNLIPRT…GKTRKIEVKG (112 aa)) is the sHSP domain.

This sequence belongs to the small heat shock protein (HSP20) family.

The polypeptide is Small heat shock protein C2 (hspC2) (Rickettsia felis (strain ATCC VR-1525 / URRWXCal2) (Rickettsia azadi)).